The primary structure comprises 470 residues: MSKKYDAGVKEYRDTYWTPDYVPLDTDLLACFKCTGQEGVPREEVAAAVAAESSTGTWSTVWSELLTDLEFYKGRCYRIEDVPGDKESFYAFIAYPLDLFEEGSITNVLTSLVGNVFGFKALRHLRLEDIRFPMAFIKTCGGPPQGIVVERDRLNKYGRPLLGCTIKPKLGLSGKNYGRVVYECLRGGLDLTKDDENINSQPFQRWRDRFEFVAEAVKLAQQETGEVKGHYLNCTATTPEEMYERAEFAKELDMPIIMHDYITGGFTANTGLANWCRKNGMLLHIHRAMHAVIDRHPKHGIHFRVLAKCLRLSGGDQLHTGTVVGKLEGDRQTTLGYIDNLRESFVPEDRTRGNFFDQDWGSMPGVFAVASGGIHVWHMPALLAIFGDDSCLQFGGGTHGHPWGSAAGAAANRVALEACVKARNAGREIEKESRDILMEAAKHSPELAIALETWKEIKFEFDTVDKLDVQ.

Substrate contacts are provided by Asn115 and Thr165. Lys167 functions as the Proton acceptor in the catalytic mechanism. Lys169 contributes to the substrate binding site. The Mg(2+) site is built by Lys193, Asp195, and Glu196. At Lys193 the chain carries N6-carboxylysine. Residue His286 is the Proton acceptor of the active site. 3 residues coordinate substrate: Arg287, His319, and Ser371.

Belongs to the RuBisCO large chain family. Type I subfamily. Heterohexadecamer of 8 large chains and 8 small chains. Mg(2+) is required as a cofactor.

The protein resides in the carboxysome. It carries out the reaction 2 (2R)-3-phosphoglycerate + 2 H(+) = D-ribulose 1,5-bisphosphate + CO2 + H2O. The catalysed reaction is D-ribulose 1,5-bisphosphate + O2 = 2-phosphoglycolate + (2R)-3-phosphoglycerate + 2 H(+). In terms of biological role, ruBisCO catalyzes two reactions: the carboxylation of D-ribulose 1,5-bisphosphate, the primary event in carbon dioxide fixation, as well as the oxidative fragmentation of the pentose substrate in the photorespiration process. Both reactions occur simultaneously and in competition at the same active site. In Prochlorococcus marinus (strain SARG / CCMP1375 / SS120), this protein is Ribulose bisphosphate carboxylase large chain.